The following is a 391-amino-acid chain: Nucleosome assembly protein 1-like 1 (391 aa).

The segment covering 1–10 has biased composition (basic and acidic residues); the sequence is MADIDNKEQS. The tract at residues 1 to 32 is disordered; it reads MADIDNKEQSELDQDLDDVEEVEEEETGEETK. Ala-2 carries the N-acetylalanine modification. The residue at position 10 (Ser-10) is a Phosphoserine. The segment covering 11 to 28 has biased composition (acidic residues); the sequence is ELDQDLDDVEEVEEEETG. Phosphothreonine occurs at positions 62 and 64. Ser-69 carries the phosphoserine modification. Residue Lys-116 is modified to N6-acetyllysine. The NAP1L motif motif lies at 125–150; that stretch reads YEPTEEECEWKPDEEDEISEELKEKA. Positions 132–143 are enriched in acidic residues; it reads CEWKPDEEDEIS. Residues 132–163 form a disordered region; it reads CEWKPDEEDEISEELKEKAKVEDEKKDEEKED. Phosphoserine is present on Ser-143. A compositionally biased stretch (basic and acidic residues) spans 144–163; sequence EELKEKAKVEDEKKDEEKED. The short motif at 273-279 is the Nuclear localization signal element; it reads IKKKQKH. Residues 345 to 391 form a disordered region; that stretch reads EAIEDDDDDYDEEGEEADEEGEEEGDEENDPDYDPKKDQNPAECKQQ. Acidic residues predominate over residues 346–376; the sequence is AIEDDDDDYDEEGEEADEEGEEEGDEENDPD. 2 positions are modified to 5-glutamyl polyglycine: Glu-359 and Glu-360. Residues 377-391 are compositionally biased toward basic and acidic residues; the sequence is YDPKKDQNPAECKQQ. A Cysteine methyl ester modification is found at Cys-388. Residue Cys-388 is the site of S-farnesyl cysteine attachment. The propeptide at 389–391 is removed in mature form; sequence KQQ.

This sequence belongs to the nucleosome assembly protein (NAP) family. In terms of assembly, homodimer. The dimer binds strongly and sequentially to single and double H2A-H2B heterodimers. Interacts with ERCC6; this interaction increases ERCC6 processivity. Interacts with RAD54. Interacts with SETD1A. In terms of processing, polyglycylated by TTLL10 on glutamate residues, resulting in polyglycine chains on the gamma-carboxyl group. Both polyglutamylation and polyglycylation modifications can coexist on the same protein on adjacent residues, and lowering polyglycylation levels increases polyglutamylation, and reciprocally. Post-translationally, polyglutamylated by TTLL4 on glutamate residues, resulting in polyglutamate chains on the gamma-carboxyl group. Both polyglutamylation and polyglycylation modifications can coexist on the same protein on adjacent residues, and lowering polyglycylation levels increases polyglutamylation, and reciprocally.

Its subcellular location is the nucleus. The protein resides in the melanosome. It localises to the cytoplasm. Histone chaperone that plays a role in the nuclear import of H2A-H2B and nucleosome assembly. Also participates in several important DNA repair mechanisms: greatly enhances ERCC6-mediated chromatin remodeling which is essential for transcription-coupled nucleotide excision DNA repair. Also stimulates homologous recombination (HR) by RAD51 and RAD54 which is essential in mitotic DNA double strand break (DSB) repair. Plays a key role in the regulation of embryonic neurogenesis. Promotes the proliferation of neural progenitors and inhibits neuronal differentiation during cortical development. Regulates neurogenesis via the modulation of RASSF10; regulates RASSF10 expression by promoting SETD1A-mediated H3K4 methylation at the RASSF10 promoter. This is Nucleosome assembly protein 1-like 1 (NAP1L1) from Bos taurus (Bovine).